The sequence spans 296 residues: Ribosomal RNA small subunit methyltransferase A (296 aa).

S-adenosyl-L-methionine contacts are provided by Asn-30, Leu-32, Gly-57, Glu-78, Asp-103, and Asn-128.

The protein belongs to the class I-like SAM-binding methyltransferase superfamily. rRNA adenine N(6)-methyltransferase family. RsmA subfamily.

Its subcellular location is the cytoplasm. The enzyme catalyses adenosine(1518)/adenosine(1519) in 16S rRNA + 4 S-adenosyl-L-methionine = N(6)-dimethyladenosine(1518)/N(6)-dimethyladenosine(1519) in 16S rRNA + 4 S-adenosyl-L-homocysteine + 4 H(+). Its function is as follows. Specifically dimethylates two adjacent adenosines (A1518 and A1519) in the loop of a conserved hairpin near the 3'-end of 16S rRNA in the 30S particle. May play a critical role in biogenesis of 30S subunits. This chain is Ribosomal RNA small subunit methyltransferase A, found in Macrococcus caseolyticus (strain JCSC5402) (Macrococcoides caseolyticum).